The primary structure comprises 296 residues: Probable porphobilinogen deaminase (296 aa).

C241 carries the post-translational modification S-(dipyrrolylmethanemethyl)cysteine.

The protein belongs to the HMBS family. Dipyrromethane is required as a cofactor.

It carries out the reaction 4 porphobilinogen + H2O = hydroxymethylbilane + 4 NH4(+). It functions in the pathway porphyrin-containing compound metabolism; protoporphyrin-IX biosynthesis; coproporphyrinogen-III from 5-aminolevulinate: step 2/4. Its function is as follows. Tetrapolymerization of the monopyrrole PBG into the hydroxymethylbilane pre-uroporphyrinogen in several discrete steps. This chain is Probable porphobilinogen deaminase, found in Pyrobaculum neutrophilum (strain DSM 2338 / JCM 9278 / NBRC 100436 / V24Sta) (Thermoproteus neutrophilus).